We begin with the raw amino-acid sequence, 1705 residues long: Protein TIC 214 (1705 aa).

A run of 5 helical transmembrane segments spans residues 18–38, 67–87, 127–147, 175–195, and 218–238; these read IINS…FSIG, FITG…HLAL, LSIQ…HFIL, VGWI…LVWI, and SMSM…HYLG.

The protein belongs to the TIC214 family. Part of the Tic complex.

It is found in the plastid. Its subcellular location is the chloroplast inner membrane. In terms of biological role, involved in protein precursor import into chloroplasts. May be part of an intermediate translocation complex acting as a protein-conducting channel at the inner envelope. The chain is Protein TIC 214 from Helianthus annuus (Common sunflower).